Reading from the N-terminus, the 316-residue chain is 4-hydroxy-3-methylbut-2-enyl diphosphate reductase (316 aa).

Residue C12 participates in [4Fe-4S] cluster binding. Residues H41 and H74 each contribute to the (2E)-4-hydroxy-3-methylbut-2-enyl diphosphate site. The dimethylallyl diphosphate site is built by H41 and H74. The isopentenyl diphosphate site is built by H41 and H74. A [4Fe-4S] cluster-binding site is contributed by C96. A (2E)-4-hydroxy-3-methylbut-2-enyl diphosphate-binding site is contributed by H124. H124 contributes to the dimethylallyl diphosphate binding site. An isopentenyl diphosphate-binding site is contributed by H124. E126 (proton donor) is an active-site residue. T167 is a binding site for (2E)-4-hydroxy-3-methylbut-2-enyl diphosphate. C197 provides a ligand contact to [4Fe-4S] cluster. 4 residues coordinate (2E)-4-hydroxy-3-methylbut-2-enyl diphosphate: S225, S226, N227, and S269. Dimethylallyl diphosphate is bound by residues S225, S226, N227, and S269. Isopentenyl diphosphate contacts are provided by S225, S226, N227, and S269.

It belongs to the IspH family. Homodimer. [4Fe-4S] cluster serves as cofactor.

It catalyses the reaction isopentenyl diphosphate + 2 oxidized [2Fe-2S]-[ferredoxin] + H2O = (2E)-4-hydroxy-3-methylbut-2-enyl diphosphate + 2 reduced [2Fe-2S]-[ferredoxin] + 2 H(+). It carries out the reaction dimethylallyl diphosphate + 2 oxidized [2Fe-2S]-[ferredoxin] + H2O = (2E)-4-hydroxy-3-methylbut-2-enyl diphosphate + 2 reduced [2Fe-2S]-[ferredoxin] + 2 H(+). The protein operates within isoprenoid biosynthesis; dimethylallyl diphosphate biosynthesis; dimethylallyl diphosphate from (2E)-4-hydroxy-3-methylbutenyl diphosphate: step 1/1. It functions in the pathway isoprenoid biosynthesis; isopentenyl diphosphate biosynthesis via DXP pathway; isopentenyl diphosphate from 1-deoxy-D-xylulose 5-phosphate: step 6/6. Functionally, catalyzes the conversion of 1-hydroxy-2-methyl-2-(E)-butenyl 4-diphosphate (HMBPP) into a mixture of isopentenyl diphosphate (IPP) and dimethylallyl diphosphate (DMAPP). Acts in the terminal step of the DOXP/MEP pathway for isoprenoid precursor biosynthesis. In Salmonella paratyphi B (strain ATCC BAA-1250 / SPB7), this protein is 4-hydroxy-3-methylbut-2-enyl diphosphate reductase.